A 795-amino-acid chain; its full sequence is Phenylalanine--tRNA ligase beta subunit (795 aa).

A tRNA-binding domain is found at 39–148 (ADEFHTVVVG…ADAPVGEDYR (110 aa)). Positions 401–476 (PKRDGITLRA…RVYGYNSIQA (76 aa)) constitute a B5 domain. Mg(2+)-binding residues include aspartate 454, aspartate 460, glutamate 463, and glutamate 464. One can recognise an FDX-ACB domain in the interval 701–794 (SRYPSIRRDL…LKSEFNATLR (94 aa)).

This sequence belongs to the phenylalanyl-tRNA synthetase beta subunit family. Type 1 subfamily. Tetramer of two alpha and two beta subunits. Mg(2+) serves as cofactor.

Its subcellular location is the cytoplasm. It catalyses the reaction tRNA(Phe) + L-phenylalanine + ATP = L-phenylalanyl-tRNA(Phe) + AMP + diphosphate + H(+). The chain is Phenylalanine--tRNA ligase beta subunit from Idiomarina loihiensis (strain ATCC BAA-735 / DSM 15497 / L2-TR).